The primary structure comprises 327 residues: Methionine import ATP-binding protein MetN (327 aa).

Residues 3-239 form the ABC transporter domain; it reads VELKNIEKIY…PKHAVTKELL (237 aa). ATP is bound at residue 36-43; that stretch reads GYSGAGKS.

This sequence belongs to the ABC transporter superfamily. Methionine importer (TC 3.A.1.24) family. In terms of assembly, the complex is composed of two ATP-binding proteins (MetN), two transmembrane proteins (MetI) and a solute-binding protein (MetQ).

It is found in the cell inner membrane. It catalyses the reaction L-methionine(out) + ATP + H2O = L-methionine(in) + ADP + phosphate + H(+). The enzyme catalyses D-methionine(out) + ATP + H2O = D-methionine(in) + ADP + phosphate + H(+). Its function is as follows. Part of the ABC transporter complex MetNIQ involved in methionine import. Responsible for energy coupling to the transport system. The chain is Methionine import ATP-binding protein MetN from Helicobacter pylori (strain HPAG1).